The primary structure comprises 323 residues: tRNA U34 carboxymethyltransferase (323 aa).

Carboxy-S-adenosyl-L-methionine contacts are provided by residues Lys91, Trp105, Lys110, Gly130, 152 to 154 (DPT), 181 to 182 (IE), Met196, Tyr200, and Arg315.

The protein belongs to the class I-like SAM-binding methyltransferase superfamily. CmoB family. As to quaternary structure, homotetramer.

It catalyses the reaction carboxy-S-adenosyl-L-methionine + 5-hydroxyuridine(34) in tRNA = 5-carboxymethoxyuridine(34) in tRNA + S-adenosyl-L-homocysteine + H(+). Catalyzes carboxymethyl transfer from carboxy-S-adenosyl-L-methionine (Cx-SAM) to 5-hydroxyuridine (ho5U) to form 5-carboxymethoxyuridine (cmo5U) at position 34 in tRNAs. The sequence is that of tRNA U34 carboxymethyltransferase from Escherichia coli O139:H28 (strain E24377A / ETEC).